A 90-amino-acid chain; its full sequence is MALNLEKKQEIIKAFATKENDTGSCEVQVALLNERIKLLTEHLKANPKDHSSRLGLLKLVAQRRNLLKYIKRTAHARYVVLIEKLGIKDR.

This sequence belongs to the universal ribosomal protein uS15 family. Part of the 30S ribosomal subunit. Forms a bridge to the 50S subunit in the 70S ribosome, contacting the 23S rRNA.

One of the primary rRNA binding proteins, it binds directly to 16S rRNA where it helps nucleate assembly of the platform of the 30S subunit by binding and bridging several RNA helices of the 16S rRNA. Functionally, forms an intersubunit bridge (bridge B4) with the 23S rRNA of the 50S subunit in the ribosome. The protein is Small ribosomal subunit protein uS15 of Helicobacter pylori (strain P12).